Reading from the N-terminus, the 194-residue chain is Outer membrane protein A (194 aa).

A signal peptide spans 1 to 24 (MNKPSKFALALAFAAVTASGVASA). A beta stranded transmembrane segment spans residues 30–38 (WRNPYGNVW). Positions 77 to 193 (MAAKVVFNAD…RVEIEIVGSR (117 aa)) constitute an OmpA-like domain.

It belongs to the outer membrane OOP (TC 1.B.6) superfamily.

The protein resides in the cell outer membrane. Functionally, structural protein that may protect the integrity of the bacterium. In Bordetella avium, this protein is Outer membrane protein A.